The sequence spans 339 residues: Autophagy protein 5 (339 aa).

A Glycyl lysine isopeptide (Lys-Gly) (interchain with G-Cter in ATG12) cross-link involves residue K168. Low complexity predominate over residues 219-230 (SSNSTQPSRPSS). The segment at 219-241 (SSNSTQPSRPSSADPSGPPRAPD) is disordered.

The protein belongs to the ATG5 family. As to quaternary structure, conjugated with ATG12. Post-translationally, conjugated to ATG12; which is essential for autophagy.

Its subcellular location is the preautophagosomal structure membrane. Involved in cytoplasm to vacuole transport (Cvt) and autophagic vesicle formation. Autophagy is essential for maintenance of amino acid levels and protein synthesis under nitrogen starvation. Required for selective autophagic degradation of the nucleus (nucleophagy). Also required for mitophagy, which eliminates defective or superfluous mitochondria in order to fulfill cellular energy requirements and prevent excess ROS production. Conjugation with ATG12, through a ubiquitin-like conjugating system involving ATG7 as an E1-like activating enzyme and ATG10 as an E2-like conjugating enzyme, is essential for its function. The ATG12-ATG5 conjugate acts as an E3-like enzyme which is required for lipidation of ATG8 and ATG8 association to the vesicle membranes. In Cryptococcus neoformans var. neoformans serotype D (strain B-3501A) (Filobasidiella neoformans), this protein is Autophagy protein 5 (ATG5).